The chain runs to 242 residues: DNA repair protein RecO (242 aa).

It belongs to the RecO family. Monomer.

Involved in DNA repair and RecF pathway recombination. This Shigella flexneri serotype 5b (strain 8401) protein is DNA repair protein RecO.